The primary structure comprises 354 residues: L-Lys-D/L-Arg epimerase (354 aa).

Substrate-binding positions include threonine 135 and 160 to 162 (KIK). Mg(2+) is bound by residues aspartate 190, glutamate 215, and aspartate 240. Substrate is bound by residues lysine 265, aspartate 295, and 318–320 (DLD).

The protein belongs to the mandelate racemase/muconate lactonizing enzyme family. Requires Mg(2+) as cofactor.

In terms of biological role, catalyzes the epimerization of L-Lys-L-Arg to L-Lys-D-Arg (in vitro). Catalyzes the epimerization of positively charged dipeptides, with a preference for substrates with a basic amino acid in the second position. Has epimerase activity with L-Lys-L-Lys, L-Arg-L-Arg, L-Val-L-Arg, L-Val-L-Lys and L-Ala-L-Arg (in vitro). This chain is L-Lys-D/L-Arg epimerase, found in Desulforapulum autotrophicum (strain ATCC 43914 / DSM 3382 / VKM B-1955 / HRM2) (Desulfobacterium autotrophicum).